The following is a 169-amino-acid chain: Adenine phosphoribosyltransferase (169 aa).

The protein belongs to the purine/pyrimidine phosphoribosyltransferase family. In terms of assembly, homodimer.

The protein localises to the cytoplasm. The enzyme catalyses AMP + diphosphate = 5-phospho-alpha-D-ribose 1-diphosphate + adenine. It participates in purine metabolism; AMP biosynthesis via salvage pathway; AMP from adenine: step 1/1. Functionally, catalyzes a salvage reaction resulting in the formation of AMP, that is energically less costly than de novo synthesis. In Mycoplasmopsis synoviae (strain 53) (Mycoplasma synoviae), this protein is Adenine phosphoribosyltransferase.